The sequence spans 746 residues: Transcription factor pbcR (746 aa).

Polar residues predominate over residues 1–12 (MYPWSSTGTSPF). Residues 1–40 (MYPWSSTGTSPFSHPDNEGAESGDMSMGEEQQQPHQRRQK) are disordered. Positions 47–76 (CQSCRASKVRCDQPNPGMPCLRCQKSGKPC) form a DNA-binding region, zn(2)-C6 fungal-type. A disordered region spans residues 109 to 131 (ELQDSAGDGETAHSTALRSPSQL). Positions 120 to 131 (AHSTALRSPSQL) are enriched in polar residues.

It is found in the nucleus. Transcription factor; part of the gene cluster that mediates the biosynthesis of the diterpene ent-pimara-8(14),15-diene (PD). Acts as a positive regulator for the cluster gene. Down-regulates the expression of the penicillin gene cluster, two putative polyketide clusters, and one putative nonribosomal peptide cluster. The protein is Transcription factor pbcR of Emericella nidulans (strain FGSC A4 / ATCC 38163 / CBS 112.46 / NRRL 194 / M139) (Aspergillus nidulans).